Reading from the N-terminus, the 120-residue chain is Flagellar transcriptional regulator FlhD (120 aa).

It belongs to the FlhD family. Homodimer; disulfide-linked. Forms a heterohexamer composed of two FlhC and four FlhD subunits. Each FlhC binds a FlhD dimer, forming a heterotrimer, and a hexamer assembles by dimerization of two heterotrimers.

It localises to the cytoplasm. Its function is as follows. Functions in complex with FlhC as a master transcriptional regulator that regulates transcription of several flagellar and non-flagellar operons by binding to their promoter region. Activates expression of class 2 flagellar genes, including fliA, which is a flagellum-specific sigma factor that turns on the class 3 genes. Also regulates genes whose products function in a variety of physiological pathways. This is Flagellar transcriptional regulator FlhD from Erwinia tasmaniensis (strain DSM 17950 / CFBP 7177 / CIP 109463 / NCPPB 4357 / Et1/99).